A 410-amino-acid chain; its full sequence is Mating-type locus allele B5 protein (410 aa).

The tract at residues 1-110 (MSSDPNFSLT…FNVVSPAVVC (110 aa)) is variable domain between B alleles. Positions 107-184 (AVVCRNLSED…NARRRSGWSH (78 aa)) form a DNA-binding region, homeobox; TALE-type. The highly conserved between B alleles stretch occupies residues 111–410 (RNLSEDLPAY…PFLCLSVAFV (300 aa)). 3 disordered regions span residues 201 to 241 (VRAK…TPAD), 275 to 336 (NKKT…PELS), and 366 to 395 (ILQS…PDEV). Residues 206–222 (SSSNQSTPPSPTSEYPS) show a composition bias toward low complexity. A Nuclear localization signal motif is present at residues 276–308 (KKTPKPGMPRPVTTVTKRQPARKTKPAAKPKSR). Positions 294-307 (QPARKTKPAAKPKS) are enriched in basic residues. The segment covering 312-336 (PRASTTPSIDSTLDSSKLESTPELS) has biased composition (polar residues). Residues 333–410 (PELSMCSTAD…PFLCLSVAFV (78 aa)) are not essential for B5 function. Basic residues predominate over residues 375–388 (RGNRKVKALPKRAG).

It belongs to the TALE/M-ATYP homeobox family.

The protein resides in the nucleus. Functionally, the B locus has at least 25 alleles, and any combination of two different B alleles yields a multimeric regulatory protein, that activates genes responsible for the pathogenicity and for the sexual development of the fungus within the corn plant. In Mycosarcoma maydis (Corn smut fungus), this protein is Mating-type locus allele B5 protein.